Here is a 67-residue protein sequence, read N- to C-terminus: MPKMKTKSSAKKRFKITASGKVKVAAAGKRHGMIKRSNKFIRDARGTMVLSDQDAKKVIQYYLPNGF.

It belongs to the bacterial ribosomal protein bL35 family.

The polypeptide is Large ribosomal subunit protein bL35 (Bartonella quintana (strain Toulouse) (Rochalimaea quintana)).